The following is a 1120-amino-acid chain: Probable leucine-rich repeat receptor-like protein kinase At1g35710 (1120 aa).

Positions methionine 1 to alanine 29 are cleaved as a signal peptide. The Extracellular segment spans residues threonine 30–glycine 783. 4 N-linked (GlcNAc...) asparagine glycosylation sites follow: asparagine 46, asparagine 60, asparagine 83, and asparagine 124. LRR repeat units lie at residues serine 78–serine 100, asparagine 103–leucine 125, lysine 127–lysine 150, asparagine 151–asparagine 172, serine 175–lysine 198, asparagine 199–methionine 221, serine 223–lysine 246, asparagine 247–methionine 269, serine 271–lysine 294, asparagine 295–isoleucine 317, serine 319–lysine 342, asparagine 343–methionine 365, serine 367–leucine 389, asparagine 391–asparagine 412, serine 415–phenylalanine 437, lysine 439–serine 461, histidine 463–lysine 484, lysine 487–lysine 510, aspartate 535–serine 557, lysine 559–methionine 581, glutamine 583–leucine 605, asparagine 607–threonine 630, asparagine 631–serine 652, lysine 655–threonine 677, glutamine 678–glutamine 701, serine 702–glycine 723, and alanine 726–arginine 748. N-linked (GlcNAc...) asparagine glycosylation is present at asparagine 151. N-linked (GlcNAc...) asparagine glycosylation is present at asparagine 295. A glycan (N-linked (GlcNAc...) asparagine) is linked at asparagine 343. N-linked (GlcNAc...) asparagine glycosylation is found at asparagine 391, asparagine 436, asparagine 460, asparagine 473, and asparagine 490. Asparagine 569, asparagine 580, asparagine 604, asparagine 607, asparagine 641, and asparagine 660 each carry an N-linked (GlcNAc...) asparagine glycan. N-linked (GlcNAc...) asparagine glycosylation is present at asparagine 712. A helical transmembrane segment spans residues asparagine 784 to alanine 804. The Cytoplasmic portion of the chain corresponds to asparagine 805–serine 1120. Threonine 848 is modified (phosphothreonine). The Protein kinase domain maps to phenylalanine 851 to serine 1120. Residues isoleucine 857–valine 865 and lysine 878 contribute to the ATP site. Phosphotyrosine is present on residues tyrosine 929 and tyrosine 968. Aspartate 981 functions as the Proton acceptor in the catalytic mechanism. A Phosphoserine modification is found at serine 1014. A phosphotyrosine mark is found at tyrosine 1022 and tyrosine 1029. A Phosphothreonine modification is found at threonine 1030.

This sequence belongs to the protein kinase superfamily. Ser/Thr protein kinase family.

It is found in the membrane. It carries out the reaction L-seryl-[protein] + ATP = O-phospho-L-seryl-[protein] + ADP + H(+). The enzyme catalyses L-threonyl-[protein] + ATP = O-phospho-L-threonyl-[protein] + ADP + H(+). This chain is Probable leucine-rich repeat receptor-like protein kinase At1g35710, found in Arabidopsis thaliana (Mouse-ear cress).